Consider the following 1761-residue polypeptide: 6-methylsalicylic acid synthase AOL_s00215g283 (1761 aa).

In terms of domain architecture, Ketosynthase family 3 (KS3) spans 18-443 (QDDIAIIGMA…GTVAHAVIEQ (426 aa)). Catalysis depends on for beta-ketoacyl synthase activity residues C190, H325, and H367. The interval 554–870 (VWVFSGHGAH…ALGKLHCHGA (317 aa)) is malonyl-CoA:ACP transacylase (MAT) domain. S641 (for malonyltransferase activity) is an active-site residue. Residues 918 to 1038 (HVLLGAKHQV…GHVANNEWSK (121 aa)) form an N-terminal hotdog fold region. Residues 918-1187 (HVLLGAKHQV…NGMRFSAVEG (270 aa)) form a dehydratase (DH) domain region. Residues 918 to 1191 (HVLLGAKHQV…FSAVEGTPGA (274 aa)) form the PKS/mFAS DH domain. Residue H950 is the Proton acceptor; for dehydratase activity of the active site. A C-terminal hotdog fold region spans residues 1050 to 1191 (LPSVKPSFAT…FSAVEGTPGA (142 aa)). The active-site Proton donor; for dehydratase activity is the D1113. The tract at residues 1399 to 1587 (GTYLITGGLG…IVSFLWTSWN (189 aa)) is ketoreductase (KR) domain. Residues 1654 to 1680 (PRKRAESSGTEAVSKGEVSEKAPVPKS) form a disordered region. Positions 1686–1761 (EYLQNAISEC…HLVKWFEEKI (76 aa)) constitute a Carrier domain. Residue S1721 is modified to O-(pantetheine 4'-phosphoryl)serine.

The catalysed reaction is 3 malonyl-CoA + acetyl-CoA + NADPH + 3 H(+) = 6-methylsalicylate + 3 CO2 + NADP(+) + 4 CoA + H2O. The protein operates within secondary metabolite biosynthesis; terpenoid biosynthesis. In terms of biological role, 6-methylsalicylic acid synthase; part of the gene cluster that mediates the biosynthesis of sesquiterpenyl epoxy-cyclohexenoids (SECs) such as anthrobotrisins and arthrosporols, metabolites that possess a novel hybrid carbon skeleton consisting of a polyketide-derived epoxycyclohexenol combined with a terpenoid-derived monocyclic sesquiterpenol substructure (PKS-PTS hybrid). The SEC pathway plays an important role for fungal soil colonization via decreasing fungal nematode-capturing ability. Within the pathway, the polyketide synthase (PKS) AOL_s00215g283 catalyzes the biosynthesis of 6-methylsalicylic acid (6-MSA) via condensation of 1 acetate and 3 malonate units. AOL_s00215g283 performs a series of programmed reactions including Claisen condensation, dehydration, reduction, and cyclization to yield 6-MSA. The pathway begins with the biosynthesis of 6-methylsalicylic acid (6-MSA), the first precursor of the polyketide-derived epoxycyclohexenol in arthrosporols, by the polyketide synthase (PKS) AOL_s00215g283. The 6-methylsalicylic acid decarboxylase AOL_s00215g281 then catalyzes the decarboxylation of 6-methylsalicylic acid to yield m-cresol. The cytochrome P450 monooxygenase AOL_s00215g282 further oxidizes m-cresol to yield toluquinol. With the assistance of the oxidoreductase AOL_s00215g277, the polyprenyl transferase AOL_s00215g276 catalyzes the farnesylation of toluquinol to produce farnesyl hydroquinone, the hybrid precursor for biosynthesis of SECs. Farnesyl hydroquinone undergoes epoxidation and then subsequent dehydrogenation to form farnesyl epoxy-quinone, the first and simplest SEC. The cytochrome P450 monooxygenase AOL_s00215g278 and the FAD-dependent monooxygenase AOL_s00215g279 might be involved in the oxygenation of the phenol moiety, most likely in the epoxy formation. The cytochrome P450 monooxygenases AOL_s00215g274 and AOL_s00215g280 are involved in specific regional ketone reductions at respectively C-4 and C-1 of farnesyl epoxy-quinone PubMed:33823587. This Arthrobotrys oligospora (strain ATCC 24927 / CBS 115.81 / DSM 1491) (Nematode-trapping fungus) protein is 6-methylsalicylic acid synthase AOL_s00215g283.